A 40-amino-acid chain; its full sequence is Chitin-binding protein 4 (40 aa).

In terms of processing, N-glycosylated.

Its function is as follows. Chitin-binding protein. Has antifungal activity against C.krusei, C.albicans, C.tropicalis and C.parapsilosis. Has antinociceptive and anti-inflammatory activity in mice. This Moringa oleifera (Horseradish tree) protein is Chitin-binding protein 4.